The primary structure comprises 232 residues: Orotidine 5'-phosphate decarboxylase (232 aa).

Residues Asp-13, Lys-35, 62 to 71 (DLKFHDIPNT), Thr-122, Arg-182, Gln-191, Gly-211, and Arg-212 contribute to the substrate site. Lys-64 (proton donor) is an active-site residue.

This sequence belongs to the OMP decarboxylase family. Type 1 subfamily. In terms of assembly, homodimer.

It carries out the reaction orotidine 5'-phosphate + H(+) = UMP + CO2. The protein operates within pyrimidine metabolism; UMP biosynthesis via de novo pathway; UMP from orotate: step 2/2. Functionally, catalyzes the decarboxylation of orotidine 5'-monophosphate (OMP) to uridine 5'-monophosphate (UMP). This chain is Orotidine 5'-phosphate decarboxylase, found in Pseudomonas paraeruginosa (strain DSM 24068 / PA7) (Pseudomonas aeruginosa (strain PA7)).